The primary structure comprises 977 residues: uncharacterized protein (977 aa).

The segment at 100–152 (ATSPLQQNGKSRDTEKPPSMKEKDLSSNSSSQHDKAFHERVDQGKNKSSTTKY) is disordered. 2 stretches are compositionally biased toward basic and acidic residues: residues 109–124 (KSRDTEKPPSMKEKDL) and 131–144 (QHDKAFHERVDQGK). Residue S165 is modified to Phosphoserine. Polar residues-rich tracts occupy residues 166–175 (PGQSVNSLKP) and 183–193 (STKSSTSSEMH). Residues 166–194 (PGQSVNSLKPNSGDEVPSTKSSTSSEMHT) form a disordered region.

This is an uncharacterized protein from Schizosaccharomyces pombe (strain 972 / ATCC 24843) (Fission yeast).